A 66-amino-acid chain; its full sequence is Metallothionein (66 aa).

Serine 1 is modified (N-acetylserine). The Cd(2+) site is built by cysteine 9, cysteine 13, cysteine 18, cysteine 20, cysteine 24, cysteine 26, cysteine 30, cysteine 32, cysteine 35, cysteine 38, cysteine 40, cysteine 45, cysteine 47, cysteine 51, cysteine 57, cysteine 59, cysteine 63, and cysteine 65.

Belongs to the metallothionein superfamily. Type 2 family.

The metallothioneins are involved in the cellular sequestration of toxic metal ions and regulation of essential trace elements. The sequence is that of Metallothionein from Arianta arbustorum (Land snail).